We begin with the raw amino-acid sequence, 577 residues long: Maltase A1 (577 aa).

Positions 1 to 19 (MRPQSAACLLLAIVGFVGA) are cleaved as a signal peptide. N-linked (GlcNAc...) asparagine glycosylation is found at Asn119 and Asn151. Asp221 serves as the catalytic Nucleophile. Asn244 is a glycosylation site (N-linked (GlcNAc...) asparagine). The Proton donor role is filled by Glu297. N-linked (GlcNAc...) asparagine glycans are attached at residues Asn315 and Asn331.

It belongs to the glycosyl hydrolase 13 family.

It catalyses the reaction Hydrolysis of terminal, non-reducing (1-&gt;4)-linked alpha-D-glucose residues with release of alpha-D-glucose.. The protein is Maltase A1 (Mal-A1) of Drosophila melanogaster (Fruit fly).